The primary structure comprises 296 residues: Glycine--tRNA ligase alpha subunit (296 aa).

The protein belongs to the class-II aminoacyl-tRNA synthetase family. In terms of assembly, tetramer of two alpha and two beta subunits.

The protein localises to the cytoplasm. The enzyme catalyses tRNA(Gly) + glycine + ATP = glycyl-tRNA(Gly) + AMP + diphosphate. The chain is Glycine--tRNA ligase alpha subunit from Polynucleobacter necessarius subsp. necessarius (strain STIR1).